A 154-amino-acid polypeptide reads, in one-letter code: Lipoprotein signal peptidase (154 aa).

2 consecutive transmembrane segments (helical) span residues 57–77 (LVLS…MIKY) and 86–103 (ISLS…YDRV). Catalysis depends on residues aspartate 110 and aspartate 129. A helical membrane pass occupies residues 124 to 144 (VFNVADICVVVGTIMIAIFIV).

The protein belongs to the peptidase A8 family.

It localises to the cell membrane. It carries out the reaction Release of signal peptides from bacterial membrane prolipoproteins. Hydrolyzes -Xaa-Yaa-Zaa-|-(S,diacylglyceryl)Cys-, in which Xaa is hydrophobic (preferably Leu), and Yaa (Ala or Ser) and Zaa (Gly or Ala) have small, neutral side chains.. The protein operates within protein modification; lipoprotein biosynthesis (signal peptide cleavage). Functionally, this protein specifically catalyzes the removal of signal peptides from prolipoproteins. This chain is Lipoprotein signal peptidase, found in Clostridium acetobutylicum (strain ATCC 824 / DSM 792 / JCM 1419 / IAM 19013 / LMG 5710 / NBRC 13948 / NRRL B-527 / VKM B-1787 / 2291 / W).